The sequence spans 191 residues: Ribosome maturation factor RimM (191 aa).

A PRC barrel domain is found at Thr-99 to Gly-172.

Belongs to the RimM family. Binds ribosomal protein uS19.

Its subcellular location is the cytoplasm. An accessory protein needed during the final step in the assembly of 30S ribosomal subunit, possibly for assembly of the head region. Essential for efficient processing of 16S rRNA. May be needed both before and after RbfA during the maturation of 16S rRNA. It has affinity for free ribosomal 30S subunits but not for 70S ribosomes. The polypeptide is Ribosome maturation factor RimM (Bartonella bacilliformis (strain ATCC 35685 / KC583 / Herrer 020/F12,63)).